We begin with the raw amino-acid sequence, 391 residues long: DNA replication and repair protein RecF (391 aa).

ATP is bound at residue 30-37 (GSNGQGKT).

It belongs to the RecF family.

It is found in the cytoplasm. Its function is as follows. The RecF protein is involved in DNA metabolism; it is required for DNA replication and normal SOS inducibility. RecF binds preferentially to single-stranded, linear DNA. It also seems to bind ATP. This is DNA replication and repair protein RecF from Saccharopolyspora erythraea (strain ATCC 11635 / DSM 40517 / JCM 4748 / NBRC 13426 / NCIMB 8594 / NRRL 2338).